A 273-amino-acid polypeptide reads, in one-letter code: Phosphatidylglycerol--prolipoprotein diacylglyceryl transferase (273 aa).

3 helical membrane-spanning segments follow: residues 20-40 (LAVRWYALAYMVSFIIALPIA), 59-79 (FLFYAILGVLLGGRLGYVLFY), and 97-117 (GGMSFHGGALGVILALAYFSW). Arginine 142 serves as a coordination point for a 1,2-diacyl-sn-glycero-3-phospho-(1'-sn-glycerol). 2 helical membrane passes run 206–226 (FGFLSGLFLFGYACARSFCEF) and 243–263 (MGQLLCIPMALAGMGLMVYAM).

The protein belongs to the Lgt family.

The protein resides in the cell inner membrane. The enzyme catalyses L-cysteinyl-[prolipoprotein] + a 1,2-diacyl-sn-glycero-3-phospho-(1'-sn-glycerol) = an S-1,2-diacyl-sn-glyceryl-L-cysteinyl-[prolipoprotein] + sn-glycerol 1-phosphate + H(+). The protein operates within protein modification; lipoprotein biosynthesis (diacylglyceryl transfer). Its function is as follows. Catalyzes the transfer of the diacylglyceryl group from phosphatidylglycerol to the sulfhydryl group of the N-terminal cysteine of a prolipoprotein, the first step in the formation of mature lipoproteins. This Gluconobacter oxydans (strain 621H) (Gluconobacter suboxydans) protein is Phosphatidylglycerol--prolipoprotein diacylglyceryl transferase.